The following is a 122-amino-acid chain: Large ribosomal subunit protein uL14 (122 aa).

It belongs to the universal ribosomal protein uL14 family. As to quaternary structure, part of the 50S ribosomal subunit. Forms a cluster with proteins L3 and L19. In the 70S ribosome, L14 and L19 interact and together make contacts with the 16S rRNA in bridges B5 and B8.

Functionally, binds to 23S rRNA. Forms part of two intersubunit bridges in the 70S ribosome. This chain is Large ribosomal subunit protein uL14, found in Streptococcus gordonii (strain Challis / ATCC 35105 / BCRC 15272 / CH1 / DL1 / V288).